Reading from the N-terminus, the 357-residue chain is 3-dehydroquinate synthase (357 aa).

Residues 126-127 (TT), Lys-139, and Lys-148 each bind NAD(+). Zn(2+)-binding residues include Glu-181, His-244, and His-261.

The protein belongs to the sugar phosphate cyclases superfamily. Dehydroquinate synthase family. Co(2+) is required as a cofactor. Requires Zn(2+) as cofactor. NAD(+) serves as cofactor.

The protein localises to the cytoplasm. It catalyses the reaction 7-phospho-2-dehydro-3-deoxy-D-arabino-heptonate = 3-dehydroquinate + phosphate. Its pathway is metabolic intermediate biosynthesis; chorismate biosynthesis; chorismate from D-erythrose 4-phosphate and phosphoenolpyruvate: step 2/7. Functionally, catalyzes the conversion of 3-deoxy-D-arabino-heptulosonate 7-phosphate (DAHP) to dehydroquinate (DHQ). This chain is 3-dehydroquinate synthase, found in Solibacter usitatus (strain Ellin6076).